Consider the following 268-residue polypeptide: 4-diphosphocytidyl-2-C-methyl-D-erythritol kinase (268 aa).

Lys10 is an active-site residue. ATP is bound at residue 101 to 111 (PTQAGLGGGST). Residue Asp143 is part of the active site.

Belongs to the GHMP kinase family. IspE subfamily.

It carries out the reaction 4-CDP-2-C-methyl-D-erythritol + ATP = 4-CDP-2-C-methyl-D-erythritol 2-phosphate + ADP + H(+). The protein operates within isoprenoid biosynthesis; isopentenyl diphosphate biosynthesis via DXP pathway; isopentenyl diphosphate from 1-deoxy-D-xylulose 5-phosphate: step 3/6. Functionally, catalyzes the phosphorylation of the position 2 hydroxy group of 4-diphosphocytidyl-2C-methyl-D-erythritol. This is 4-diphosphocytidyl-2-C-methyl-D-erythritol kinase from Helicobacter acinonychis (strain Sheeba).